Reading from the N-terminus, the 234-residue chain is Nuclear transcription factor Y subunit B-6 (234 aa).

Disordered stretches follow at residues 1–21 and 35–55; these read MERGGFHGYRKLSVNNTTPSP and MRPPEFNQPNKTSNGGEEECT. The DNA-binding element occupies 63–69; the sequence is MPIANVI. The interval 90–101 is subunit association domain (SAD); sequence IQECVSEYISFI. A disordered region spans residues 206–234; the sequence is NEPNSKMSGSSSGASGARVEVFPTQQHKY. Over residues 213-222 the composition is skewed to low complexity; that stretch reads SGSSSGASGA.

It belongs to the NFYB/HAP3 subunit family. As to quaternary structure, heterotrimeric transcription factor composed of three components, NF-YA, NF-YB and NF-YC. NF-YB and NF-YC must interact and dimerize for NF-YA association and DNA binding. Interacts with PRN1. Binds directly with DPB3-1. As to expression, expressed in roots, flowers and developing siliques. Present in etiolated seedlings.

The protein localises to the nucleus. Component of the NF-Y/HAP transcription factor complex. The NF-Y complex stimulates the transcription of various genes by recognizing and binding to a CCAAT motif in promoters. Plays a role in the regulation of the embryogenesis. Involved in the abscisic acid (ABA) signaling pathway. In Arabidopsis thaliana (Mouse-ear cress), this protein is Nuclear transcription factor Y subunit B-6.